Here is a 459-residue protein sequence, read N- to C-terminus: Cysteine--tRNA ligase (459 aa).

C28 contributes to the Zn(2+) binding site. The 'HIGH' region motif lies at 30–40 (VTIYDLCHIGH). C209, H234, and E238 together coordinate Zn(2+). A 'KMSKS' region motif is present at residues 266–270 (KMSKS). Residue K269 coordinates ATP.

The protein belongs to the class-I aminoacyl-tRNA synthetase family. In terms of assembly, monomer. Zn(2+) serves as cofactor.

Its subcellular location is the cytoplasm. The enzyme catalyses tRNA(Cys) + L-cysteine + ATP = L-cysteinyl-tRNA(Cys) + AMP + diphosphate. The polypeptide is Cysteine--tRNA ligase (Shewanella baltica (strain OS185)).